Here is a 371-residue protein sequence, read N- to C-terminus: NDMA-dependent alcohol dehydrogenase (371 aa).

Zn(2+) is bound by residues Cys-40, His-61, Cys-91, Cys-94, Cys-97, Cys-105, and Cys-167.

This sequence belongs to the zinc-containing alcohol dehydrogenase family. As to quaternary structure, homotrimer. The cofactor is NADH.

The enzyme catalyses N,N-dimethyl-4-nitrosoaniline + a primary alcohol = 4-(hydroxylamino)-N,N-dimethylaniline + an aldehyde. It carries out the reaction ethanol + A = acetaldehyde + AH2. With respect to regulation, inhibited by trans-4-(N,N-dimethylamino)-cinnamaldehyde through direct binding to the catalytic zinc ion in a substrate-like geometry. Isobutyramide acts as a competitive inhibitor with respect to the electron acceptor NDMA. Acetaldehyde, AMP, ADP, ATP, as well as CuSO(4), FeSO(4), HgCl(2), NiCl(2), ZnSO(4), KCN, and NaN(3) are additional inhibitors of the catalytic activity. Its function is as follows. Catalytically different from common alcohol dehydrogenases. Effective in oxidizing ethanol, other primary alcohols and benzylalcohol only in the presence of p-nitroso-N,N-dimethylaniline (NDMA) as an electron acceptor. NADH acts as a cofactor here instead as a coenzyme. This is NDMA-dependent alcohol dehydrogenase from Amycolatopsis methanolica.